Here is a 598-residue protein sequence, read N- to C-terminus: NADH-quinone oxidoreductase subunit C/D (598 aa).

Positions 1-190 (MSIFTQEVSA…EAFSLDDERL (190 aa)) are NADH dehydrogenase I subunit C. The segment at 214-598 (DYLFLNLGPN…IDFVMADVDR (385 aa)) is NADH dehydrogenase I subunit D.

In the N-terminal section; belongs to the complex I 30 kDa subunit family. This sequence in the C-terminal section; belongs to the complex I 49 kDa subunit family. NDH-1 is composed of 13 different subunits. Subunits NuoB, CD, E, F, and G constitute the peripheral sector of the complex.

Its subcellular location is the cell inner membrane. The catalysed reaction is a quinone + NADH + 5 H(+)(in) = a quinol + NAD(+) + 4 H(+)(out). Functionally, NDH-1 shuttles electrons from NADH, via FMN and iron-sulfur (Fe-S) centers, to quinones in the respiratory chain. The immediate electron acceptor for the enzyme in this species is believed to be ubiquinone. Couples the redox reaction to proton translocation (for every two electrons transferred, four hydrogen ions are translocated across the cytoplasmic membrane), and thus conserves the redox energy in a proton gradient. This Shewanella woodyi (strain ATCC 51908 / MS32) protein is NADH-quinone oxidoreductase subunit C/D.